The primary structure comprises 133 residues: MAANDTIADMLTRIRNANMARHQTTLVPATKMTRSIAKVLQEEGFIAEISEEGDEVKRNLVIALKYKGKNRQPLITALKRVSKPGLRVYSNRKELPRVLGGIGIAIISTSSGIMTDREARRQNLGGEVLCYVW.

This sequence belongs to the universal ribosomal protein uS8 family. As to quaternary structure, part of the 30S ribosomal subunit. Contacts proteins S5 and S12.

Its function is as follows. One of the primary rRNA binding proteins, it binds directly to 16S rRNA central domain where it helps coordinate assembly of the platform of the 30S subunit. In Trichormus variabilis (strain ATCC 29413 / PCC 7937) (Anabaena variabilis), this protein is Small ribosomal subunit protein uS8.